Reading from the N-terminus, the 250-residue chain is Triosephosphate isomerase (250 aa).

A substrate-binding site is contributed by Asn-9–Lys-11. His-95 serves as the catalytic Electrophile. Catalysis depends on Glu-167, which acts as the Proton acceptor. Substrate-binding positions include Gly-173, Ser-213, and Gly-234–Gly-235.

The protein belongs to the triosephosphate isomerase family. As to quaternary structure, homodimer.

The protein resides in the cytoplasm. It carries out the reaction D-glyceraldehyde 3-phosphate = dihydroxyacetone phosphate. It functions in the pathway carbohydrate biosynthesis; gluconeogenesis. The protein operates within carbohydrate degradation; glycolysis; D-glyceraldehyde 3-phosphate from glycerone phosphate: step 1/1. Functionally, involved in the gluconeogenesis. Catalyzes stereospecifically the conversion of dihydroxyacetone phosphate (DHAP) to D-glyceraldehyde-3-phosphate (G3P). The chain is Triosephosphate isomerase from Herpetosiphon aurantiacus (strain ATCC 23779 / DSM 785 / 114-95).